Consider the following 608-residue polypeptide: Albumin 1 (608 aa).

Positions M1–S14 are cleaved as a signal peptide. The propeptide occupies V15 to R18. Albumin domains are found at residues S19–H205, A206–D398, and K402–S600. 18 disulfide bridges follow: C26-C72, C71-C80, C93-C108, C107-C118, C142-C187, C186-C195, C218-C264, C263-C271, C283-C299, C298-C309, C336-C381, C380-C389, C414-C460, C459-C471, C484-C500, C499-C510, C537-C582, and C581-C590. N501 carries N-linked (GlcNAc...) asparagine glycosylation.

Belongs to the ALB/AFP/VDB family. As to expression, plasma.

The protein resides in the secreted. Functionally, binds water, Ca(2+), Na(+), K(+), fatty acids, hormones, bilirubin and drugs. Its main function is the regulation of the colloidal osmotic pressure of blood. The protein is Albumin 1 (alb1) of Salmo salar (Atlantic salmon).